The primary structure comprises 125 residues: UPF0231 protein in hemN 3'region (125 aa).

Belongs to the UPF0231 family.

In Mannheimia haemolytica (Pasteurella haemolytica), this protein is UPF0231 protein in hemN 3'region.